The primary structure comprises 478 residues: Proline--tRNA ligase (478 aa).

Belongs to the class-II aminoacyl-tRNA synthetase family. ProS type 3 subfamily. As to quaternary structure, homodimer.

Its subcellular location is the cytoplasm. The catalysed reaction is tRNA(Pro) + L-proline + ATP = L-prolyl-tRNA(Pro) + AMP + diphosphate. Catalyzes the attachment of proline to tRNA(Pro) in a two-step reaction: proline is first activated by ATP to form Pro-AMP and then transferred to the acceptor end of tRNA(Pro). This is Proline--tRNA ligase from Clostridium botulinum (strain Kyoto / Type A2).